A 452-amino-acid chain; its full sequence is Phosphoglucosamine mutase (452 aa).

Serine 98 acts as the Phosphoserine intermediate in catalysis. Positions 98, 239, 241, and 243 each coordinate Mg(2+). Phosphoserine is present on serine 98.

The protein belongs to the phosphohexose mutase family. The cofactor is Mg(2+). In terms of processing, activated by phosphorylation.

The enzyme catalyses alpha-D-glucosamine 1-phosphate = D-glucosamine 6-phosphate. Its function is as follows. Catalyzes the conversion of glucosamine-6-phosphate to glucosamine-1-phosphate. In Anaplasma marginale (strain Florida), this protein is Phosphoglucosamine mutase.